Here is a 479-residue protein sequence, read N- to C-terminus: Glycogen synthase (479 aa).

Residue K16 coordinates ADP-alpha-D-glucose.

It belongs to the glycosyltransferase 1 family. Bacterial/plant glycogen synthase subfamily.

It catalyses the reaction [(1-&gt;4)-alpha-D-glucosyl](n) + ADP-alpha-D-glucose = [(1-&gt;4)-alpha-D-glucosyl](n+1) + ADP + H(+). The protein operates within glycan biosynthesis; glycogen biosynthesis. In terms of biological role, synthesizes alpha-1,4-glucan chains using ADP-glucose. This Lactiplantibacillus plantarum (strain ATCC BAA-793 / NCIMB 8826 / WCFS1) (Lactobacillus plantarum) protein is Glycogen synthase.